Here is a 286-residue protein sequence, read N- to C-terminus: Ribose-phosphate pyrophosphokinase (286 aa).

Residues 34–36 (DGE) and 91–93 (RQH) contribute to the ATP site. Residues H124 and D161 each coordinate Mg(2+). The active site involves K184. D-ribose 5-phosphate-binding positions include R186, D210, and 214–218 (STGGT).

This sequence belongs to the ribose-phosphate pyrophosphokinase family. Class III (archaeal) subfamily. Homodimer. Mg(2+) is required as a cofactor.

The protein resides in the cytoplasm. The enzyme catalyses D-ribose 5-phosphate + ATP = 5-phospho-alpha-D-ribose 1-diphosphate + AMP + H(+). It participates in metabolic intermediate biosynthesis; 5-phospho-alpha-D-ribose 1-diphosphate biosynthesis; 5-phospho-alpha-D-ribose 1-diphosphate from D-ribose 5-phosphate (route I): step 1/1. Involved in the biosynthesis of the central metabolite phospho-alpha-D-ribosyl-1-pyrophosphate (PRPP) via the transfer of pyrophosphoryl group from ATP to 1-hydroxyl of ribose-5-phosphate (Rib-5-P). The sequence is that of Ribose-phosphate pyrophosphokinase from Thermoplasma volcanium (strain ATCC 51530 / DSM 4299 / JCM 9571 / NBRC 15438 / GSS1).